The primary structure comprises 423 residues: Transcription factor bHLH14 (423 aa).

The disordered stretch occupies residues 192–243; sequence GKTTKHTNQTGSYPKPAVSDHSKSGNQQFGSERKRRRKLETTRVAAATKEKH. Residues 245-294 form the bHLH domain; sequence PAVLSHVEAEKQRREKLNHRFYALRAIVPKVSRMDKASLLSDAVSYIESL. The segment at 312–343 is disordered; the sequence is ETDKLDNSSSNTSPSSVEYQVNQKPSKSNRGS. Residues 318 to 327 are compositionally biased toward low complexity; sequence NSSSNTSPSS. Polar residues predominate over residues 328–342; that stretch reads VEYQVNQKPSKSNRG.

In terms of assembly, homodimer.

It localises to the nucleus. This is Transcription factor bHLH14 (BHLH14) from Arabidopsis thaliana (Mouse-ear cress).